Consider the following 394-residue polypeptide: RHOMBOID-like protein 4 (394 aa).

Residues 1-51 (MGEKDSETAPIWGKTRERERSNNNNIQPMDLESSSSVSGQQRSLTQSRSSY) are disordered. Over residues 39–49 (GQQRSLTQSRS) the composition is skewed to polar residues. The next 7 helical transmembrane spans lie at 64-84 (WFPW…VITM), 147-167 (WLHG…FIGI), 175-195 (FIRI…LSAL), 201-221 (ISVG…SEIF), 231-251 (VVTI…GVLP), 254-274 (DNFA…VLLI), and 300-320 (ILWT…LISL). Catalysis depends on S206, which acts as the Nucleophile. The active-site Charge relay system is H258.

This sequence belongs to the peptidase S54 family.

The protein resides in the membrane. The catalysed reaction is Cleaves type-1 transmembrane domains using a catalytic dyad composed of serine and histidine that are contributed by different transmembrane domains.. Probable rhomboid-type serine protease that catalyzes intramembrane proteolysis. In Arabidopsis thaliana (Mouse-ear cress), this protein is RHOMBOID-like protein 4.